Here is a 79-residue protein sequence, read N- to C-terminus: ATP synthase subunit c (79 aa).

A run of 2 helical transmembrane segments spans residues Ile11 to Leu31 and Phe53 to Tyr73.

The protein belongs to the ATPase C chain family. In terms of assembly, F-type ATPases have 2 components, F(1) - the catalytic core - and F(0) - the membrane proton channel. F(1) has five subunits: alpha(3), beta(3), gamma(1), delta(1), epsilon(1). F(0) has three main subunits: a(1), b(2) and c(10-14). The alpha and beta chains form an alternating ring which encloses part of the gamma chain. F(1) is attached to F(0) by a central stalk formed by the gamma and epsilon chains, while a peripheral stalk is formed by the delta and b chains.

It is found in the cell inner membrane. In terms of biological role, f(1)F(0) ATP synthase produces ATP from ADP in the presence of a proton or sodium gradient. F-type ATPases consist of two structural domains, F(1) containing the extramembraneous catalytic core and F(0) containing the membrane proton channel, linked together by a central stalk and a peripheral stalk. During catalysis, ATP synthesis in the catalytic domain of F(1) is coupled via a rotary mechanism of the central stalk subunits to proton translocation. Functionally, key component of the F(0) channel; it plays a direct role in translocation across the membrane. A homomeric c-ring of between 10-14 subunits forms the central stalk rotor element with the F(1) delta and epsilon subunits. The chain is ATP synthase subunit c from Blochmanniella floridana.